The following is a 139-amino-acid chain: Maximins 4/H3 type 4 (139 aa).

The signal sequence occupies residues 1-18 (MNFKYIIAVSFLIASAYA). Residues 19 to 43 (RSVQNDEQSLSQRDVLEEESLREIR) constitute a propeptide that is removed on maturation. Asn-70 is subject to Asparagine amide. Residues 74–118 (TAEEHEVMKRLEAVMRDLDSLDHPEEASERETRGFNQDEIAKEKR) constitute a propeptide that is removed on maturation. The residue at position 138 (Ile-138) is an Isoleucine amide.

Belongs to the bombinin family. As to expression, expressed by the skin glands.

The protein localises to the secreted. Maximin-4 shows antibacterial activity against both Gram-positive and Gram-negative bacteria. It also shows antimicrobial activity against the fungus C.albicans, but not against A.flavus nor P.uticale. It has little hemolytic activity. It does not possess a significant cytotoxicity against tumor cell lines. It does not possess a significant anti-HIV activity. Functionally, maximin-H3 shows antibacterial activity against both Gram-positive and Gram-negative bacteria. It also shows antimicrobial activity against the fungus C.albicans. Shows strong hemolytic activity. The protein is Maximins 4/H3 type 4 of Bombina maxima (Giant fire-bellied toad).